Reading from the N-terminus, the 631-residue chain is Plastidic ATP/ADP-transporter (631 aa).

The next 11 membrane-spanning stretches (helical) occupy residues 106–126, 149–169, 180–200, 238–258, 271–290, 313–333, 369–389, 407–427, 442–462, 465–485, and 543–563; these read IELV…CILF, IIPF…MLLY, ALFY…GFVL, LFYV…FWGF, FYPL…GRTV, GMMS…WWVN, LATL…TWKS, DFST…QWIF, VLLL…PLAP, AKFG…QNIF, and LASS…AWLG. The interval 586–631 is disordered; that stretch reads ERASLKIPVVSQNENGNGPLSSESSLNPAGGDSTNASSEPSSPRSL. Residues 595–631 show a composition bias toward polar residues; sequence VSQNENGNGPLSSESSLNPAGGDSTNASSEPSSPRSL.

The protein belongs to the ADP/ATP translocase tlc (TC 2.A.12.2) family.

The protein localises to the plastid. Its subcellular location is the chloroplast membrane. The chain is Plastidic ATP/ADP-transporter from Solanum tuberosum (Potato).